Here is a 332-residue protein sequence, read N- to C-terminus: Ketol-acid reductoisomerase (NADP(+)) (332 aa).

The KARI N-terminal Rossmann domain occupies 1–182 (MAVIYYDKDC…GSNRAGVLET (182 aa)). NADP(+) is bound by residues 25–28 (YGAQ) and 83–86 (DTSQ). The active site involves His108. NADP(+) is bound at residue Gly134. Residues 183–328 (TFAEETETDL…AELRSMMSWL (146 aa)) form the KARI C-terminal knotted domain. 4 residues coordinate Mg(2+): Asp191, Glu195, Glu227, and Glu231. Ser252 contacts substrate.

The protein belongs to the ketol-acid reductoisomerase family. Mg(2+) serves as cofactor.

The enzyme catalyses (2R)-2,3-dihydroxy-3-methylbutanoate + NADP(+) = (2S)-2-acetolactate + NADPH + H(+). It catalyses the reaction (2R,3R)-2,3-dihydroxy-3-methylpentanoate + NADP(+) = (S)-2-ethyl-2-hydroxy-3-oxobutanoate + NADPH + H(+). It participates in amino-acid biosynthesis; L-isoleucine biosynthesis; L-isoleucine from 2-oxobutanoate: step 2/4. The protein operates within amino-acid biosynthesis; L-valine biosynthesis; L-valine from pyruvate: step 2/4. Involved in the biosynthesis of branched-chain amino acids (BCAA). Catalyzes an alkyl-migration followed by a ketol-acid reduction of (S)-2-acetolactate (S2AL) to yield (R)-2,3-dihydroxy-isovalerate. In the isomerase reaction, S2AL is rearranged via a Mg-dependent methyl migration to produce 3-hydroxy-3-methyl-2-ketobutyrate (HMKB). In the reductase reaction, this 2-ketoacid undergoes a metal-dependent reduction by NADPH to yield (R)-2,3-dihydroxy-isovalerate. The sequence is that of Ketol-acid reductoisomerase (NADP(+)) from Dehalococcoides mccartyi (strain ATCC BAA-2266 / KCTC 15142 / 195) (Dehalococcoides ethenogenes (strain 195)).